We begin with the raw amino-acid sequence, 442 residues long: Elongation factor 1-alpha (442 aa).

The tr-type G domain occupies 5–228 (KTHINIVVIG…DSVTPPERPV (224 aa)). The segment at 14–21 (GHVDSGKS) is G1. GTP is bound at residue 14 to 21 (GHVDSGKS). The G2 stretch occupies residues 70–74 (GITID). Residues 91–94 (DAPG) form a G3 region. Residues 91–95 (DAPGH) and 153–156 (NKMD) each bind GTP. A G4 region spans residues 153–156 (NKMD). A G5 region spans residues 192 to 194 (SGF).

It belongs to the TRAFAC class translation factor GTPase superfamily. Classic translation factor GTPase family. EF-Tu/EF-1A subfamily.

Its subcellular location is the cytoplasm. Its function is as follows. This protein promotes the GTP-dependent binding of aminoacyl-tRNA to the A-site of ribosomes during protein biosynthesis. This chain is Elongation factor 1-alpha, found in Entamoeba histolytica (strain ATCC 30459 / HM-1:IMSS / ABRM).